Consider the following 300-residue polypeptide: Shikimate kinase, chloroplastic (300 aa).

The N-terminal 65 residues, 1-65 (MEARVSQSLQ…SDRRVQLKVS (65 aa)), are a transit peptide targeting the chloroplast. 111-118 (GMMGCGKT) is a binding site for ATP. Residue Thr-118 coordinates Mg(2+). Asp-136, Arg-161, and Gly-183 together coordinate substrate. Position 222 (Arg-222) interacts with ATP.

It belongs to the shikimate kinase family. It depends on Mg(2+) as a cofactor.

The protein resides in the plastid. The protein localises to the chloroplast. It catalyses the reaction shikimate + ATP = 3-phosphoshikimate + ADP + H(+). Its pathway is metabolic intermediate biosynthesis; chorismate biosynthesis; chorismate from D-erythrose 4-phosphate and phosphoenolpyruvate: step 5/7. Its function is as follows. Catalyzes the specific phosphorylation of the 3-hydroxyl group of shikimic acid using ATP as a cosubstrate. The sequence is that of Shikimate kinase, chloroplastic (SK) from Solanum lycopersicum (Tomato).